Consider the following 1328-residue polypeptide: ABC transporter G family member 2 (1328 aa).

One can recognise an ABC transporter 1 domain in the interval 53–299 (VTARNLSMSI…FEGLGFKLPK (247 aa)). ATP is bound at residue 91-98 (GSPGCGKT). An ABC transmembrane type-2 1 domain is found at 388–665 (ISSQVAVRMR…FGMYFFLKNV (278 aa)). Transmembrane regions (helical) follow at residues 398-418 (IIKS…LDLN), 428-448 (LIFF…AILF), 477-497 (IPIA…MCGL), 504-524 (FIYF…FFKM), 534-554 (LASV…GFMA), 559-579 (IGGW…FEGL), and 642-662 (IDLL…YFFL). The disordered stretch occupies residues 670 to 691 (RASDPKNDKRSKKASKRSKKIK). A compositionally biased stretch (basic residues) spans 678–689 (KRSKKASKRSKK). Residues 721 to 960 (VYEVDVKKDG…DLLGYFENHG (240 aa)) form the ABC transporter 2 domain. 755 to 762 (GPSGAGKS) is an ATP binding site. In terms of domain architecture, ABC transmembrane type-2 2 spans 1049 to 1286 (VRRVQNIRTR…PICPITNGNQ (238 aa)). A run of 6 helical transmembrane segments spans residues 1059–1076 (LMRS…FVRM), 1087–1107 (VSIL…SIPI), 1128–1148 (IYLF…AIIY), 1172–1192 (FISF…ATVL), 1197–1217 (IAHA…GFMI), and 1303–1323 (AVIF…LKFI).

Belongs to the ABC transporter superfamily. ABCG family. PDR (TC 3.A.1.205) subfamily.

Its subcellular location is the endosome membrane. Its function is as follows. Required for endocytosis and endosomal pH regulation. In Dictyostelium discoideum (Social amoeba), this protein is ABC transporter G family member 2 (abcG2).